We begin with the raw amino-acid sequence, 134 residues long: RxLR effector protein Avh238 (134 aa).

Residues Met-1–Ala-21 form the signal peptide. The RxLR-dEER motif lies at Arg-44–Arg-68. The segment at Asp-50 to Phe-72 is disordered. Residues Asp-61–Pro-70 are compositionally biased toward basic and acidic residues.

This sequence belongs to the RxLR effector family.

It is found in the secreted. Its subcellular location is the host cytoplasm. The protein localises to the host nucleus. In terms of biological role, effector that, due to the lack of a histidine residue at position 79, is not able to induce cell death in tomato, tobacco, eggplant, potato, or in A.thaliana. This is RxLR effector protein Avh238 from Phytophthora sojae (Soybean stem and root rot agent).